We begin with the raw amino-acid sequence, 172 residues long: Small ribosomal subunit protein uS5 (172 aa).

Positions 16-79 constitute an S5 DRBM domain; the sequence is LKDRLVAINR…EAAKKNLIRV (64 aa).

It belongs to the universal ribosomal protein uS5 family. Part of the 30S ribosomal subunit. Contacts proteins S4 and S8.

Functionally, with S4 and S12 plays an important role in translational accuracy. Its function is as follows. Located at the back of the 30S subunit body where it stabilizes the conformation of the head with respect to the body. This Porphyromonas gingivalis (strain ATCC BAA-308 / W83) protein is Small ribosomal subunit protein uS5.